Consider the following 574-residue polypeptide: Aspartate--tRNA ligase (574 aa).

Residue Glu169 coordinates L-aspartate. An aspartate region spans residues 193 to 196 (QLFK). Arg215 lines the L-aspartate pocket. Residues 215-217 (RDE) and Gln224 each bind ATP. His437 is a binding site for L-aspartate. Position 471 (Glu471) interacts with ATP. Arg478 is a binding site for L-aspartate. 523 to 526 (GLDR) is a binding site for ATP.

It belongs to the class-II aminoacyl-tRNA synthetase family. Type 1 subfamily. In terms of assembly, homodimer.

It localises to the cytoplasm. The catalysed reaction is tRNA(Asp) + L-aspartate + ATP = L-aspartyl-tRNA(Asp) + AMP + diphosphate. In terms of biological role, catalyzes the attachment of L-aspartate to tRNA(Asp) in a two-step reaction: L-aspartate is first activated by ATP to form Asp-AMP and then transferred to the acceptor end of tRNA(Asp). This is Aspartate--tRNA ligase from Mycoplasma mycoides subsp. mycoides SC (strain CCUG 32753 / NCTC 10114 / PG1).